The primary structure comprises 914 residues: Serine/threonine-protein kinase MST20 (914 aa).

Polar residues predominate over residues 1–12; it reads MDGHSNFTQPSD. Disordered regions lie at residues 1–140, 156–184, and 251–286; these read MDGH…QLQN, NQYSAASHRRSNSYGHPHGPQSSNSLTFN, and AMSEKSQQVRGMEAQLPTSKRYSDETKEPKPGVLRK. Composition is skewed to low complexity over residues 13–26, 63–72, and 79–97; these read TSHASHTIPSSSSS, RSSTSLRRAP, and TPTSTHASNSSSPRNPSSS. Residues 122–136 show a composition bias toward basic and acidic residues; that stretch reads ARDRDSDPARNDHGH. The segment covering 156 to 166 has biased composition (basic residues); it reads NQYSAASHRRS. Over residues 175–184 the composition is skewed to polar residues; that stretch reads PQSSNSLTFN. Over residues 271–280 the composition is skewed to basic and acidic residues; it reads RYSDETKEPK. Residues 306–319 form the CRIB domain; it reads ISAPENPVHVTHVG. Positions 408-615 are disordered; that stretch reads SPMISPPASP…RHRSRQSNGL (208 aa). Low complexity-rich tracts occupy residues 516 to 548 and 562 to 576; these read AYPASQQSPAVQAAYQQQLMQQQQEQALAQAQA and QPQAQQPTPPQSQHQ. The segment covering 577–586 has biased composition (polar residues); that stretch reads YSRPTDANGA. The span at 587–596 shows a compositional bias: low complexity; it reads QQTQRPQQPQ. The Protein kinase domain maps to 634–885; sequence YRSFTKIGQG…AHDLLRHEFM (252 aa). ATP-binding positions include 640 to 648 and Lys663; that span reads IGQGASGGV. The active-site Proton acceptor is Asp753.

Belongs to the protein kinase superfamily. STE Ser/Thr protein kinase family. STE20 subfamily.

It is found in the cytoplasm. It localises to the nucleus. The catalysed reaction is L-seryl-[protein] + ATP = O-phospho-L-seryl-[protein] + ADP + H(+). It carries out the reaction L-threonyl-[protein] + ATP = O-phospho-L-threonyl-[protein] + ADP + H(+). In terms of biological role, MAP4K component of the MAPK pathway required for the mating pheromone response and the regulation of cell polarity and cell cycle. Phosphorylates histone H2B to form H2BS10ph. Is involved in conidiation, aerial hyphal growth and infection-related morphogenesis. In Pyricularia oryzae (strain 70-15 / ATCC MYA-4617 / FGSC 8958) (Rice blast fungus), this protein is Serine/threonine-protein kinase MST20 (MST20).